A 257-amino-acid chain; its full sequence is Hydroxyethylthiazole kinase (257 aa).

Residue Met42 coordinates substrate. Residues Arg117 and Thr163 each contribute to the ATP site. Ala190 lines the substrate pocket.

The protein belongs to the Thz kinase family. Mg(2+) serves as cofactor.

It carries out the reaction 5-(2-hydroxyethyl)-4-methylthiazole + ATP = 4-methyl-5-(2-phosphooxyethyl)-thiazole + ADP + H(+). Its pathway is cofactor biosynthesis; thiamine diphosphate biosynthesis; 4-methyl-5-(2-phosphoethyl)-thiazole from 5-(2-hydroxyethyl)-4-methylthiazole: step 1/1. Its function is as follows. Catalyzes the phosphorylation of the hydroxyl group of 4-methyl-5-beta-hydroxyethylthiazole (THZ). This is Hydroxyethylthiazole kinase from Roseobacter denitrificans (strain ATCC 33942 / OCh 114) (Erythrobacter sp. (strain OCh 114)).